We begin with the raw amino-acid sequence, 473 residues long: Sulfhydrylase-like protein lolC2 (473 aa).

Lys-226 is subject to N6-(pyridoxal phosphate)lysine.

This sequence belongs to the trans-sulfuration enzymes family. Requires pyridoxal 5'-phosphate as cofactor.

Its pathway is alkaloid biosynthesis. Its function is as follows. Sulfhydrylase-like protein; part of the gene cluster that mediates the biosynthesis of loline alkaloids, potent insecticidal agents composed of a pyrrolizidine ring system and an uncommon ether bridge linking carbons 2 and 7. Lolines are structurally differentiated by the various modifications of the L-amino group and include norloline, loline, N-methylloline, N-acetylloline, N-acetylnorloline, and N-formylloline. The first committed step is the condensation of O-acetyl-L-homoserine (derived from L-aspartic acid) and L-proline, probably catalyzed by the gamma-type pyridoxal 5'-phosphate(PLP)-dependent enzyme lolC, to give the diamino diacid, NACPP. Ensuing cyclization, decarboxylation, and acetylation steps yield 1-exo-acetamidopyrrolizidine (AcAP). LolO is required for installation of the ether bridge upon the pathway intermediate, 1-exo-acetamidopyrrolizidine (AcAP). In sequential 2-oxoglutarate- and O(2)-consuming steps, lolO removes hydrogens from C2 and C7 of AcAP to form both carbon-oxygen bonds in N-acetylnorloline (NANL), the precursor to all other lolines. The enzymes lolD, lolE, lolF and lolT have also been proposed to be involved in the ether-bridge installation. Further processing of the exocyclic moiety of NANL by fungal N-acetamidase (LolN), methyltransferase (LolM), and cytochrome P450 (LolP) enzymes, with occasional involvement of a plant acetyltransferase, generates the other known lolines. LolN transforms NANL to norlonine which is monomethylated and dimethylated to respectively lonine and N-methyllonine (NML) by lolM. LolP catalyzes hydroxylation of the methyl group in N-methylloline (NML) and further oxygenation to N-formylloline (NFL). A plant acetyltransferase is responsible for the acetylation of loline to form N-acetylloline (NAL). LolA might interact with aspartate kinase to prevent feedback inhibition of its activity by these end products and thereby promote production of L-homoserine from L-aspartate. In Epichloe uncinata (Endophyte fungus), this protein is Sulfhydrylase-like protein lolC2.